The chain runs to 159 residues: uncharacterized protein (159 aa).

This is an uncharacterized protein from Homo sapiens (Human).